The chain runs to 460 residues: Keratin, type I cytoskeletal 27 (460 aa).

Residues 1–83 (MSVRFSSASR…GNEHGLLSGN (83 aa)) are head. Residues 84-119 (EKVTMQNLNDRLASYLDNVRALEEANADLEQKIKGW) are coil 1A. The 316-residue stretch at 84–399 (EKVTMQNLND…RLIDGEDGSC (316 aa)) folds into the IF rod domain. A linker 1 region spans residues 120–141 (YEKFGPGSCRGLDHDYSRYFTV). Positions 142–233 (IDDLRNQIIS…KNHEEEMKAL (92 aa)) are coil 1B. The tract at residues 234 to 256 (QCAAGGNVNVEMNAAPGVDLTVL) is linker 12. The coil 2 stretch occupies residues 257–395 (LNNMRAEYEA…ETYCRLIDGE (139 aa)). The tail stretch occupies residues 396–460 (DGSCTKSKGY…NMKSEQRVPS (65 aa)). A disordered region spans residues 429–460 (DPRGKVPSSRVHTVEEKSTKVNNMKSEQRVPS). The span at 448 to 460 (KVNNMKSEQRVPS) shows a compositional bias: polar residues.

The protein belongs to the intermediate filament family. As to quaternary structure, heterotetramer of two type I and two type II keratins. Interacts with KRT6A to form filaments.

It is found in the cytoplasm. In terms of biological role, essential for the proper assembly of type I and type II keratin protein complexes and formation of keratin intermediate filaments in the inner root sheath (irs). This is Keratin, type I cytoskeletal 27 from Capra hircus (Goat).